The sequence spans 160 residues: Transmembrane protein 191A (160 aa).

The chain crosses the membrane as a helical span at residues 24 to 44; sequence FCFPLDFVSNLFWIFASKFII.

Belongs to the TMEM191 family.

It is found in the membrane. The chain is Transmembrane protein 191A (TMEM191A) from Homo sapiens (Human).